Here is a 173-residue protein sequence, read N- to C-terminus: Translation initiation factor IF-3 (173 aa).

It belongs to the IF-3 family. As to quaternary structure, monomer.

It is found in the cytoplasm. Functionally, IF-3 binds to the 30S ribosomal subunit and shifts the equilibrium between 70S ribosomes and their 50S and 30S subunits in favor of the free subunits, thus enhancing the availability of 30S subunits on which protein synthesis initiation begins. This is Translation initiation factor IF-3 from Methylobacterium radiotolerans (strain ATCC 27329 / DSM 1819 / JCM 2831 / NBRC 15690 / NCIMB 10815 / 0-1).